The chain runs to 345 residues: MPKAYENAGVSVEAGYEVVKRIKSHVARTNRPGVVGGIGGFGGLFDLASLGYKEPVLISGTDGVGTKLMVAKLANKHDTIGIDCVAMCVNDIAAQGAEPLFFLDYIACGKNDPALLEQVVAGVADGCVQAGSALVGGETAEMPGMYDEDEYDLAGFSVGVAEKSAIVDGSTIAEGDVLIGLPSTGVHSNGFSLVRKALFEQAGYTVDTELDELGGEKLGDVLLTPTKIYVKALSPLFKAGVVKGVAHITGGGFIENIPRMIPDGLAAEIELGTWPVLPIFDVLEKAGNIDHKEMYNIFNMGIGMVLAIDPARKDEALKLLADNNEPAYVLGSITADTTGTQIVLK.

This sequence belongs to the AIR synthase family.

The protein localises to the cytoplasm. It catalyses the reaction 2-formamido-N(1)-(5-O-phospho-beta-D-ribosyl)acetamidine + ATP = 5-amino-1-(5-phospho-beta-D-ribosyl)imidazole + ADP + phosphate + H(+). It participates in purine metabolism; IMP biosynthesis via de novo pathway; 5-amino-1-(5-phospho-D-ribosyl)imidazole from N(2)-formyl-N(1)-(5-phospho-D-ribosyl)glycinamide: step 2/2. In Bifidobacterium longum (strain DJO10A), this protein is Phosphoribosylformylglycinamidine cyclo-ligase.